The following is a 379-amino-acid chain: Cytochrome b (379 aa).

A run of 4 helical transmembrane segments spans residues 33–53 (FGSL…FLAM), 77–98 (WLIR…FIHV), 113–133 (WNIG…GYVL), and 178–198 (FFAF…VHLL). His-83 and His-97 together coordinate heme b. Positions 182 and 196 each coordinate heme b. A ubiquinone is bound at residue His-201. 4 helical membrane passes run 226 to 246 (IKDL…ALFF), 288 to 308 (LGGV…PLLN), 320 to 340 (VTQT…WIGG), and 347 to 367 (FTMI…VLMP).

Belongs to the cytochrome b family. In terms of assembly, the cytochrome bc1 complex contains 11 subunits: 3 respiratory subunits (MT-CYB, CYC1 and UQCRFS1), 2 core proteins (UQCRC1 and UQCRC2) and 6 low-molecular weight proteins (UQCRH/QCR6, UQCRB/QCR7, UQCRQ/QCR8, UQCR10/QCR9, UQCR11/QCR10 and a cleavage product of UQCRFS1). This cytochrome bc1 complex then forms a dimer. Heme b serves as cofactor.

The protein resides in the mitochondrion inner membrane. Component of the ubiquinol-cytochrome c reductase complex (complex III or cytochrome b-c1 complex) that is part of the mitochondrial respiratory chain. The b-c1 complex mediates electron transfer from ubiquinol to cytochrome c. Contributes to the generation of a proton gradient across the mitochondrial membrane that is then used for ATP synthesis. The sequence is that of Cytochrome b (MT-CYB) from Akodon iniscatus (Intelligent grass mouse).